The chain runs to 225 residues: tRNA (guanine-N(1)-)-methyltransferase (225 aa).

S-adenosyl-L-methionine-binding positions include Gly-112 and 132–137 (IGDYVL).

It belongs to the RNA methyltransferase TrmD family. As to quaternary structure, homodimer.

The protein resides in the cytoplasm. It catalyses the reaction guanosine(37) in tRNA + S-adenosyl-L-methionine = N(1)-methylguanosine(37) in tRNA + S-adenosyl-L-homocysteine + H(+). In terms of biological role, specifically methylates guanosine-37 in various tRNAs. The polypeptide is tRNA (guanine-N(1)-)-methyltransferase (Bacteroides thetaiotaomicron (strain ATCC 29148 / DSM 2079 / JCM 5827 / CCUG 10774 / NCTC 10582 / VPI-5482 / E50)).